A 305-amino-acid chain; its full sequence is Probable 5-dehydro-4-deoxyglucarate dehydratase (305 aa).

This sequence belongs to the DapA family.

The enzyme catalyses 5-dehydro-4-deoxy-D-glucarate + H(+) = 2,5-dioxopentanoate + CO2 + H2O. It functions in the pathway carbohydrate acid metabolism; D-glucarate degradation; 2,5-dioxopentanoate from D-glucarate: step 2/2. The sequence is that of Probable 5-dehydro-4-deoxyglucarate dehydratase from Pseudomonas entomophila (strain L48).